A 212-amino-acid polypeptide reads, in one-letter code: Thymidylate kinase (212 aa).

ATP is bound at residue 11–18; sequence GIEGSGKT.

The protein belongs to the thymidylate kinase family.

The catalysed reaction is dTMP + ATP = dTDP + ADP. Its function is as follows. Phosphorylation of dTMP to form dTDP in both de novo and salvage pathways of dTTP synthesis. The chain is Thymidylate kinase from Buchnera aphidicola subsp. Baizongia pistaciae (strain Bp).